Reading from the N-terminus, the 74-residue chain is Putative Fe(2+) transport protein A (74 aa).

The protein belongs to the FeoA family.

Its function is as follows. Might be involved in Fe(2+) ion uptake. The chain is Putative Fe(2+) transport protein A from Campylobacter jejuni subsp. jejuni serotype O:2 (strain ATCC 700819 / NCTC 11168).